The chain runs to 297 residues: Protoheme IX farnesyltransferase (297 aa).

Helical transmembrane passes span 26–46, 48–68, 96–116, 120–140, 147–167, 174–194, 218–238, 245–265, and 276–296; these read VTQL…PGMV, YPVL…AFAV, LHII…LWNF, LTMW…TWLL, NIVI…AAVT, AWHL…ALAL, LLNI…PYIY, YLIS…ALFI, and FRFS…DHYF.

It belongs to the UbiA prenyltransferase family. Protoheme IX farnesyltransferase subfamily.

It is found in the cell inner membrane. The catalysed reaction is heme b + (2E,6E)-farnesyl diphosphate + H2O = Fe(II)-heme o + diphosphate. The protein operates within porphyrin-containing compound metabolism; heme O biosynthesis; heme O from protoheme: step 1/1. Its function is as follows. Converts heme B (protoheme IX) to heme O by substitution of the vinyl group on carbon 2 of heme B porphyrin ring with a hydroxyethyl farnesyl side group. This is Protoheme IX farnesyltransferase from Polynucleobacter necessarius subsp. necessarius (strain STIR1).